The sequence spans 550 residues: Hydroxylamine reductase (550 aa).

[2Fe-2S] cluster contacts are provided by Cys-3, Cys-6, Cys-18, and Cys-25. Residues His-249, Glu-273, Cys-317, Cys-405, Cys-433, Cys-458, Glu-492, and Lys-494 each coordinate hybrid [4Fe-2O-2S] cluster. The residue at position 405 (Cys-405) is a Cysteine persulfide.

This sequence belongs to the HCP family. The cofactor is [2Fe-2S] cluster. Hybrid [4Fe-2O-2S] cluster serves as cofactor.

The protein resides in the cytoplasm. The enzyme catalyses A + NH4(+) + H2O = hydroxylamine + AH2 + H(+). Functionally, catalyzes the reduction of hydroxylamine to form NH(3) and H(2)O. The polypeptide is Hydroxylamine reductase (Yersinia pseudotuberculosis serotype O:1b (strain IP 31758)).